The chain runs to 159 residues: Large ribosomal subunit protein uL15 (159 aa).

A compositionally biased stretch (basic and acidic residues) spans 1–13; that stretch reads MRLNELRDNDGAT. The disordered stretch occupies residues 1–41; sequence MRLNELRDNDGATKIRTRVGRGIGSGKGKTGGRGVKGQKSR. Over residues 21–35 the composition is skewed to gly residues; that stretch reads RGIGSGKGKTGGRGV.

This sequence belongs to the universal ribosomal protein uL15 family. As to quaternary structure, part of the 50S ribosomal subunit.

Its function is as follows. Binds to the 23S rRNA. In Maricaulis maris (strain MCS10) (Caulobacter maris), this protein is Large ribosomal subunit protein uL15.